The following is a 252-amino-acid chain: Phosphate import ATP-binding protein PstB 1 (252 aa).

Residues 6–247 (LQVSDLSVYY…PKHKETEDYI (242 aa)) enclose the ABC transporter domain. 38–45 (GPSGSGKS) serves as a coordination point for ATP.

This sequence belongs to the ABC transporter superfamily. Phosphate importer (TC 3.A.1.7) family. In terms of assembly, the complex is composed of two ATP-binding proteins (PstB), two transmembrane proteins (PstC and PstA) and a solute-binding protein (PstS).

It localises to the cell membrane. The enzyme catalyses phosphate(out) + ATP + H2O = ADP + 2 phosphate(in) + H(+). Functionally, part of the ABC transporter complex PstSACB involved in phosphate import. Responsible for energy coupling to the transport system. The polypeptide is Phosphate import ATP-binding protein PstB 1 (Streptococcus agalactiae serotype Ia (strain ATCC 27591 / A909 / CDC SS700)).